The sequence spans 161 residues: Small ribosomal subunit protein uS19 (161 aa).

The span at 1-19 (MARQKKYSGKGGARKKNKQ) shows a compositional bias: basic residues. The disordered stretch occupies residues 1–26 (MARQKKYSGKGGARKKNKQKQSVAPR).

It belongs to the universal ribosomal protein uS19 family.

In terms of biological role, protein S19 forms a complex with S13 that binds strongly to the 16S ribosomal RNA. This is Small ribosomal subunit protein uS19 from Methanococcus maripaludis (strain C6 / ATCC BAA-1332).